The sequence spans 1436 residues: tRNA (guanosine(18)-2'-O)-methyltransferase (1436 aa).

S-adenosyl-L-methionine contacts are provided by residues 1365-1367 (LEQ), G1389, and 1409-1418 (IQQFGVIRSM).

This sequence belongs to the class IV-like SAM-binding methyltransferase superfamily. RNA methyltransferase TrmH family.

The protein resides in the cytoplasm. The catalysed reaction is guanosine(18) in tRNA + S-adenosyl-L-methionine = 2'-O-methylguanosine(18) in tRNA + S-adenosyl-L-homocysteine + H(+). Functionally, S-adenosyl-L-methionine-dependent 2'-O-ribose methyltransferase that catalyzes the formation of 2'-O-methylguanosine at position 18 (Gm18) in various tRNAs. The chain is tRNA (guanosine(18)-2'-O)-methyltransferase from Saccharomyces cerevisiae (strain ATCC 204508 / S288c) (Baker's yeast).